The chain runs to 132 residues: Outer membrane protein RomA (132 aa).

The protein to M.tuberculosis Rv0906.

Its subcellular location is the cell outer membrane. In Klebsiella pneumoniae, this protein is Outer membrane protein RomA (romA).